We begin with the raw amino-acid sequence, 94 residues long: Large ribosomal subunit protein eL42 (94 aa).

Residues C11, C14, C71, and C74 each coordinate Zn(2+). Residues 11-74 (CPYCKRHTIH…LDLRFVCTVC (64 aa)) form a C4-type zinc finger.

This sequence belongs to the eukaryotic ribosomal protein eL42 family. In terms of assembly, part of the 50S ribosomal subunit. Zn(2+) serves as cofactor.

Binds to the 23S rRNA. The polypeptide is Large ribosomal subunit protein eL42 (Pyrococcus horikoshii (strain ATCC 700860 / DSM 12428 / JCM 9974 / NBRC 100139 / OT-3)).